The primary structure comprises 185 residues: Elongation factor P (185 aa).

This sequence belongs to the elongation factor P family.

Its subcellular location is the cytoplasm. It participates in protein biosynthesis; polypeptide chain elongation. In terms of biological role, involved in peptide bond synthesis. Stimulates efficient translation and peptide-bond synthesis on native or reconstituted 70S ribosomes in vitro. Probably functions indirectly by altering the affinity of the ribosome for aminoacyl-tRNA, thus increasing their reactivity as acceptors for peptidyl transferase. This chain is Elongation factor P (efp), found in Nostoc sp. (strain PCC 7120 / SAG 25.82 / UTEX 2576).